We begin with the raw amino-acid sequence, 504 residues long: ATP synthase subunit alpha, chloroplastic (504 aa).

169–176 (GDRQTGKT) is a binding site for ATP.

Belongs to the ATPase alpha/beta chains family. F-type ATPases have 2 components, CF(1) - the catalytic core - and CF(0) - the membrane proton channel. CF(1) has five subunits: alpha(3), beta(3), gamma(1), delta(1), epsilon(1). CF(0) has four main subunits: a, b, b' and c.

It localises to the plastid. Its subcellular location is the chloroplast thylakoid membrane. The enzyme catalyses ATP + H2O + 4 H(+)(in) = ADP + phosphate + 5 H(+)(out). Its function is as follows. Produces ATP from ADP in the presence of a proton gradient across the membrane. The alpha chain is a regulatory subunit. The polypeptide is ATP synthase subunit alpha, chloroplastic (Stigeoclonium helveticum (Green alga)).